The following is a 678-amino-acid chain: MELRPYQWEVILPALEGKNIIIWLPTGAGKTRAAAFVAKRHLETVDRGKVVVLVNRVHLVSQHAEEFRRMLDKHWTVTTLSGDMGSRAGFGLMARSHDLLICTAELLQLALNSSEEDEHVELREFSLIVVDECHHTHKDTVYNTILSRYLEQKLKKAEPLPQVLGLTASPGTGGATKLQGAIDHILQLCANLDTCHIMSPKNCYSQLLMHNPKPCKQYDLCQRRAQDPFGDLIKKLMNQIHQQLEMPDLKQQFGTQMYEQQVVQLCKDAAEAGLQEQRVYALHLRRYNDALFIHDTVRARDALDMLQDFYDRERTTKTQMVRAESWLLKLFDDHKNVLGQLAARGPENPKLEMLERILLKQFGSPGHTRGIIFTRTRQTASSLLLWLRQQPCLQTVGIKPQMLIGAGNTSQSTHMTQKDQQEVIQEFRDGILSLLVATSVAEEGLDIAQCNVVVRYGLLTNEISMVQARGRARAGQSVYSFLATEGSREMKRELTNEALEVLMEKAVAAVQKMDPDEFKAKIRDLQQASLVKRAARAAHREIQQGQFLPEHVQLLCINCMVAVGYGSDLRKVEGTHHVNVNPNFSVYYTTSQNPVVINKVFKDWRPGGTIRCSNCGEVWGFQMIYKSVTLPVLKIGSILLETPRGKIQAKKWSRVPFSIPVFDILQDCTQSLSELSLD.

Residues 11–188 form the Helicase ATP-binding domain; it reads ILPALEGKNI…QGAIDHILQL (178 aa). 24-31 contacts ATP; that stretch reads LPTGAGKT. Residues 131-134 carry the DECH box motif; that stretch reads DECH. Residues 353–514 enclose the Helicase C-terminal domain; the sequence is MLERILLKQF…KAVAAVQKMD (162 aa). A coiled-coil region spans residues 489–546; the sequence is EMKRELTNEALEVLMEKAVAAVQKMDPDEFKAKIRDLQQASLVKRAARAAHREIQQGQ. The RLR CTR domain maps to 542-669; it reads IQQGQFLPEH…PVFDILQDCT (128 aa). Residues C556, C559, C612, and C615 each contribute to the Zn(2+) site. The segment at 572 to 655 is RNA-binding; the sequence is VEGTHHVNVN…KIQAKKWSRV (84 aa).

Belongs to the helicase family. RLR subfamily. As to quaternary structure, monomer in the absence of dsRNA. Homodimer in the presence of dsRNA. Interacts with RIGI (via CARD domain), MAVS/IPS1 and DDX60. Found in a complex with RIGI and IFIH1/MDA5. Interacts with ANKRD17. Directly interacts with ATG5 and ATG12, either as ATG5 and ATG12 monomers or as ATG12-ATG5 conjugates. As to expression, highly expressed in mammary tissues. Expressed in liver and testis. Expressed at lower level in spleen, embryo, mammary gland and breast tumors.

The protein localises to the cytoplasm. The catalysed reaction is ATP + H2O = ADP + phosphate + H(+). In terms of biological role, acts as a regulator of RIGI and IFIH1/MDA5 mediated antiviral signaling. Cannot initiate antiviral signaling as it lacks the CARD domain required for activating MAVS/IPS1-dependent signaling events. Can have both negative and positive regulatory functions related to RIGI and IFIH1/MDA5 signaling and this role in regulating signaling may be complex and could probably depend on characteristics of the infecting virus or target cells, or both. Its inhibitory action on RIG-I signaling may involve the following mechanisms: competition with RIGI for binding to the viral RNA, binding to RIGI and inhibiting its dimerization and interaction with MAVS/IPS1, competing with IKBKE in its binding to MAVS/IPS1 thereby inhibiting activation of interferon regulatory factor 3 (IRF3). Its positive regulatory role may involve unwinding or stripping nucleoproteins of viral RNA thereby facilitating their recognition by RIGI and IFIH1/MDA5. Involved in the innate immune response to various RNA viruses and some DNA viruses such as poxviruses, and also to the bacterial pathogen Listeria monocytogenes. Can bind both ssRNA and dsRNA, with a higher affinity for dsRNA. Shows a preference to 5'-triphosphorylated RNA, although it can recognize RNA lacking a 5'-triphosphate. The sequence is that of ATP-dependent RNA helicase DHX58 from Mus musculus (Mouse).